Consider the following 226-residue polypeptide: Orotidine 5'-phosphate decarboxylase (226 aa).

Substrate contacts are provided by residues aspartate 9, lysine 31, 58 to 67 (DLKLYDIPNT), threonine 115, arginine 176, glutamine 184, glycine 204, and arginine 205. The Proton donor role is filled by lysine 60.

Belongs to the OMP decarboxylase family. Type 1 subfamily. As to quaternary structure, homodimer.

It catalyses the reaction orotidine 5'-phosphate + H(+) = UMP + CO2. It functions in the pathway pyrimidine metabolism; UMP biosynthesis via de novo pathway; UMP from orotate: step 2/2. Functionally, catalyzes the decarboxylation of orotidine 5'-monophosphate (OMP) to uridine 5'-monophosphate (UMP). The polypeptide is Orotidine 5'-phosphate decarboxylase (Wolbachia pipientis subsp. Culex pipiens (strain wPip)).